Consider the following 390-residue polypeptide: Purine permease 21 (390 aa).

Positions 12-34 (QQGKEPIPTDQDERSSVSGSQTK) are disordered. The next 10 membrane-spanning stretches (helical) occupy residues 44–64 (WLRV…ATIL), 78–98 (LATV…LLSV), 118–138 (LVYI…SIGL), 140–160 (YLPV…TAFF), 169–189 (LTPI…LLAF), 204–224 (YVKG…LLSL), 241–261 (VINM…VGLF), 287–307 (LVWT…LIFE), 312–332 (FSNA…VIIF), and 336–356 (MNGL…SYVY). Positions 367–390 (KSNEIPTTESPDRPEAEGSSEQSK) are disordered.

It belongs to the purine permeases (TC 2.A.7.14) family. As to expression, expressed in mesophyll cells.

The protein localises to the membrane. The protein is Purine permease 21 of Arabidopsis thaliana (Mouse-ear cress).